The chain runs to 748 residues: Tyrosine--tRNA ligase 2, cytoplasmic (748 aa).

Methionine 1 carries the N-acetylmethionine modification. A 'HIGH' region motif is present at residues 441–449; that stretch reads PSGRMHIAQ. L-tyrosine is bound by residues tyrosine 564, glutamine 568, aspartate 571, and glutamine 586. Residues 623–627 carry the 'KMSKS' region motif; that stretch reads KMSKS. Lysine 626 provides a ligand contact to ATP.

This sequence belongs to the class-I aminoacyl-tRNA synthetase family.

The protein resides in the cytoplasm. It is found in the cytosol. It carries out the reaction tRNA(Tyr) + L-tyrosine + ATP = L-tyrosyl-tRNA(Tyr) + AMP + diphosphate + H(+). Functionally, catalyzes the attachment of tyrosine to tRNA(Tyr) in a two-step reaction: tyrosine is first activated by ATP to form Tyr-AMP and then transferred to the acceptor end of tRNA(Tyr). The chain is Tyrosine--tRNA ligase 2, cytoplasmic from Arabidopsis thaliana (Mouse-ear cress).